The following is a 237-amino-acid chain: Endonuclease V (237 aa).

The Mg(2+) site is built by Asp-46 and Asp-114.

It belongs to the endonuclease V family. Mg(2+) serves as cofactor.

It is found in the cytoplasm. The catalysed reaction is Endonucleolytic cleavage at apurinic or apyrimidinic sites to products with a 5'-phosphate.. In terms of biological role, DNA repair enzyme involved in the repair of deaminated bases. Selectively cleaves double-stranded DNA at the second phosphodiester bond 3' to a deoxyinosine leaving behind the intact lesion on the nicked DNA. This chain is Endonuclease V, found in Xanthomonas oryzae pv. oryzae (strain PXO99A).